Consider the following 100-residue polypeptide: Urease subunit gamma (100 aa).

This sequence belongs to the urease gamma subunit family. Heterotrimer of UreA (gamma), UreB (beta) and UreC (alpha) subunits. Three heterotrimers associate to form the active enzyme.

The protein localises to the cytoplasm. It carries out the reaction urea + 2 H2O + H(+) = hydrogencarbonate + 2 NH4(+). It participates in nitrogen metabolism; urea degradation; CO(2) and NH(3) from urea (urease route): step 1/1. This chain is Urease subunit gamma, found in Staphylococcus aureus (strain N315).